Consider the following 442-residue polypeptide: Envelope glycoprotein D (442 aa).

The first 19 residues, Met1–Leu19, serve as a signal peptide directing secretion. The Virion surface segment spans residues Thr20–Gly405. 2 N-linked (GlcNAc...) asparagine; by host glycosylation sites follow: Asn103 and Asn111. 3 cysteine pairs are disulfide-bonded: Cys138–Cys259, Cys176–Cys273, and Cys188–Cys197. A disordered region spans residues Pro331–Phe364. 2 N-linked (GlcNAc...) asparagine; by host glycosylation sites follow: Asn347 and Asn396. A helical transmembrane segment spans residues Leu406–Leu422. Residues Arg423–Leu442 lie on the Intravirion side of the membrane.

It belongs to the herpesviridae glycoprotein D family.

It is found in the virion membrane. Functionally, envelope glycoprotein that binds to host cell entry receptors, promoting the virus entry into host cells. May trigger fusion with host membrane, by recruiting the fusion machinery composed of gB and gH/gL. The polypeptide is Envelope glycoprotein D (gD) (Equine herpesvirus 1 (strain Kentucky A) (EHV-1)).